An 841-amino-acid polypeptide reads, in one-letter code: Follistatin-related protein 4 (841 aa).

The N-terminal stretch at 1-22 (MKPGGFWPHLALLGVSLPAVLG) is a signal peptide. The interval 29-54 (SRSPNMVPGESQAEETRGFEVTRREG) is disordered. The segment covering 42–54 (EETRGFEVTRREG) has biased composition (basic and acidic residues). One can recognise a Kazal-like domain in the interval 80–134 (TTGQPSCQCLEVCRPRYMPVCGSDGRLYGNHCELRRAACLLGKRIVSVHSKDCFL). Cystine bridges form between Cys86/Cys118, Cys92/Cys111, and Cys100/Cys132. EF-hand domains follow at residues 173 to 208 (QKRL…EQDM) and 225 to 247 (DYNS…IQLS). 10 residues coordinate Ca(2+): Asp186, Asp188, Asn190, His192, Glu197, Asp225, Asn227, Asp229, Ser231, and Glu236. Ig-like domains lie at 250–336 (PEDK…VLQV) and 340–425 (PVIR…EDIS). Cystine bridges form between Cys269–Cys320 and Cys361–Cys412. Asn317 carries N-linked (GlcNAc...) asparagine glycosylation.

Its subcellular location is the secreted. The protein is Follistatin-related protein 4 (Fstl4) of Mus musculus (Mouse).